The chain runs to 212 residues: Putative tyrosine-protein phosphatase R622 (212 aa).

The Tyrosine-protein phosphatase domain occupies 9-191 (KISQVTNNIF…LQGYQSKKEN (183 aa)). Cys135 (phosphocysteine intermediate) is an active-site residue.

This sequence belongs to the protein-tyrosine phosphatase family. Non-receptor class dual specificity subfamily.

The catalysed reaction is O-phospho-L-tyrosyl-[protein] + H2O = L-tyrosyl-[protein] + phosphate. This chain is Putative tyrosine-protein phosphatase R622, found in Acanthamoeba polyphaga mimivirus (APMV).